The following is a 119-amino-acid chain: Ribonuclease P protein component (119 aa).

The protein belongs to the RnpA family. As to quaternary structure, consists of a catalytic RNA component (M1 or rnpB) and a protein subunit.

It carries out the reaction Endonucleolytic cleavage of RNA, removing 5'-extranucleotides from tRNA precursor.. Its function is as follows. RNaseP catalyzes the removal of the 5'-leader sequence from pre-tRNA to produce the mature 5'-terminus. It can also cleave other RNA substrates such as 4.5S RNA. The protein component plays an auxiliary but essential role in vivo by binding to the 5'-leader sequence and broadening the substrate specificity of the ribozyme. This is Ribonuclease P protein component from Syntrophus aciditrophicus (strain SB).